A 232-amino-acid polypeptide reads, in one-letter code: Octanoyltransferase (232 aa).

Positions 43-231 constitute a BPL/LPL catalytic domain; it reads DQTPNYFLFV…HFTQLFDCTV (189 aa). Residues 88 to 95, 160 to 162, and 173 to 175 contribute to the substrate site; these read RGGDITYH, ALG, and GFA. Cys191 (acyl-thioester intermediate) is an active-site residue.

It belongs to the LipB family.

Its subcellular location is the cytoplasm. The enzyme catalyses octanoyl-[ACP] + L-lysyl-[protein] = N(6)-octanoyl-L-lysyl-[protein] + holo-[ACP] + H(+). It participates in protein modification; protein lipoylation via endogenous pathway; protein N(6)-(lipoyl)lysine from octanoyl-[acyl-carrier-protein]: step 1/2. Its function is as follows. Catalyzes the transfer of endogenously produced octanoic acid from octanoyl-acyl-carrier-protein onto the lipoyl domains of lipoate-dependent enzymes. Lipoyl-ACP can also act as a substrate although octanoyl-ACP is likely to be the physiological substrate. This chain is Octanoyltransferase, found in Flavobacterium psychrophilum (strain ATCC 49511 / DSM 21280 / CIP 103535 / JIP02/86).